The primary structure comprises 93 residues: Small ribosomal subunit protein uS19 (93 aa).

The protein belongs to the universal ribosomal protein uS19 family.

In terms of biological role, protein S19 forms a complex with S13 that binds strongly to the 16S ribosomal RNA. The polypeptide is Small ribosomal subunit protein uS19 (Nautilia profundicola (strain ATCC BAA-1463 / DSM 18972 / AmH)).